Consider the following 459-residue polypeptide: Cyclooctatin synthase (459 aa).

Residue C408 participates in heme binding.

It belongs to the cytochrome P450 family. The cofactor is heme.

The enzyme catalyses cyclooctat-9-ene-5,7-diol + AH2 + O2 = cyclooctatin + A + H2O. In terms of biological role, involved in the biosynthesis of cyclooctatin, a potent inhibitor of lysophospholipase. Catalyzes the hydroxylation of cyclooctat-9-ene-5,7-diol at C-18 to yield the final product, cyclooctatin. This is Cyclooctatin synthase from Streptomyces melanosporofaciens.